Reading from the N-terminus, the 178-residue chain is Oligoribonuclease (178 aa).

Residues 7–168 (LIWIDLEMTG…DDIRESIAEL (162 aa)) form the Exonuclease domain. Residue tyrosine 128 is part of the active site.

It belongs to the oligoribonuclease family.

Its subcellular location is the cytoplasm. Functionally, 3'-to-5' exoribonuclease specific for small oligoribonucleotides. In Francisella tularensis subsp. holarctica (strain FTNF002-00 / FTA), this protein is Oligoribonuclease.